A 341-amino-acid chain; its full sequence is Elongation factor Ts, mitochondrial 2 (341 aa).

The N-terminal 17 residues, 1-17 (MLAARFASRAFPRTRLY), are a transit peptide targeting the mitochondrion.

The protein belongs to the EF-Ts family.

It localises to the mitochondrion. Associates with the EF-Tu.GDP complex and induces the exchange of GDP to GTP. It remains bound to the aminoacyl-tRNA.EF-Tu.GTP complex up to the GTP hydrolysis stage on the ribosome. The protein is Elongation factor Ts, mitochondrial 2 of Postia placenta (strain ATCC 44394 / Madison 698-R) (Brown rot fungus).